The primary structure comprises 132 residues: UPF0299 membrane protein YohJ (132 aa).

The next 4 helical transmembrane spans lie at 5–25 (LNIIWQYLRAFVLIYACLYAG), 26–46 (IFIASLLPVTIPGSIIGMLIL), 63–83 (GCYVLIRYMALLFVPIGVGVM), and 93–113 (FGPVVVSCAVSTLVVFLVVSW).

It belongs to the UPF0299 family.

Its subcellular location is the cell inner membrane. This chain is UPF0299 membrane protein YohJ, found in Shigella flexneri serotype 5b (strain 8401).